The following is a 321-amino-acid chain: Beta-ketoacyl-[acyl-carrier-protein] synthase III (321 aa).

Active-site residues include Cys114 and His248. Residues Gln249–Arg253 are ACP-binding. Asn278 is a catalytic residue.

This sequence belongs to the thiolase-like superfamily. FabH family. Homodimer.

It localises to the cytoplasm. It carries out the reaction malonyl-[ACP] + acetyl-CoA + H(+) = 3-oxobutanoyl-[ACP] + CO2 + CoA. It functions in the pathway lipid metabolism; fatty acid biosynthesis. Catalyzes the condensation reaction of fatty acid synthesis by the addition to an acyl acceptor of two carbons from malonyl-ACP. Catalyzes the first condensation reaction which initiates fatty acid synthesis and may therefore play a role in governing the total rate of fatty acid production. Possesses both acetoacetyl-ACP synthase and acetyl transacylase activities. Its substrate specificity determines the biosynthesis of branched-chain and/or straight-chain of fatty acids. This Sphingopyxis alaskensis (strain DSM 13593 / LMG 18877 / RB2256) (Sphingomonas alaskensis) protein is Beta-ketoacyl-[acyl-carrier-protein] synthase III.